The sequence spans 851 residues: Internalin J (851 aa).

The first 25 residues, 1 to 25 (MKTTKIVIASLVSLTMVSNPLLTFA), serve as a signal peptide directing secretion. LRR repeat units lie at residues 94–115 (TLTS…EKLT), 116–136 (GLTK…SQNT), 137–157 (NLTY…TPLT), 158–179 (KLTY…QNPL), 180–200 (LTYL…HNTQ), 201–221 (LTEL…TPQT), 222–243 (QLTT…QNKL), 244–263 (LNRL…NQNI), 264–284 (QLTF…TPLT), 285–306 (QLTY…TLSK), 316–325 (DLLEIDLTHN), 338–357 (KIKE…DCQA), 359–368 (GITELDLSQN), and 380–402 (ELTE…NAHI). MucBP domains lie at 506 to 568 (PIKG…SQSV), 576 to 638 (IVAA…AQTV), 647 to 709 (APEK…SQTV), and 717 to 779 (IEAA…AQTV). A disordered region spans residues 786–825 (NTNTDQPLPTKKPTNTTPTKPSNLKTTEVKKASDTLPKTG). Residues 792-811 (PLPTKKPTNTTPTKPSNLKT) show a composition bias toward low complexity. Residues 821-825 (LPKTG) carry the LPXTG sorting signal motif. Residue T824 is modified to Pentaglycyl murein peptidoglycan amidated threonine. A propeptide spans 825 to 851 (GDSAPWKSALLGVFLSSTALVIWKKKK) (removed by sortase A).

This sequence belongs to the internalin family. Nearly full-length mature protein and an internal LRR-containing fragment interact in vitro with human intestinal mucin-2 (MUC2) but not with mucin-1. LRR fragment binding is slightly better at pH 5.5, (the pH of the intestine) than at pH 7.4.

It localises to the secreted. The protein localises to the cell wall. With respect to regulation, despite being transcribed during bacterial growth in culture the protein is only detected in infected mice. Functionally, involved in several steps of L.monocytogenes infection by both intravenous and oral infection. Probably acts as an adhesion; upon ectopic expression in L.innocula bacteria adhere better to human cell lines. The protein is Internalin J (inlJ) of Listeria monocytogenes serovar 1/2a (strain ATCC BAA-679 / EGD-e).